Reading from the N-terminus, the 127-residue chain is V-type proton ATPase subunit F (127 aa).

It belongs to the V-ATPase F subunit family. In terms of assembly, V-ATPase is a heteromultimeric enzyme made up of two complexes: the ATP-hydrolytic V1 complex and the proton translocation V0 complex. The V1 complex consists of three catalytic AB heterodimers that form a heterohexamer, three peripheral stalks each consisting of EG heterodimers, one central rotor including subunits D and F, and the regulatory subunits C and H. The proton translocation complex V0 consists of the proton transport subunit a, a ring of proteolipid subunits c9c'', rotary subunit d, subunits e and f, and the accessory subunits VhaAC45 and ATP6AP2.

Functionally, subunit of the V1 complex of vacuolar(H+)-ATPase (V-ATPase), a multisubunit enzyme composed of a peripheral complex (V1) that hydrolyzes ATP and a membrane integral complex (V0) that translocates protons. V-ATPase is responsible for acidifying and maintaining the pH of intracellular compartments and in some cell types, is targeted to the plasma membrane, where it is responsible for acidifying the extracellular environment. The polypeptide is V-type proton ATPase subunit F (Vha14) (Anopheles gambiae (African malaria mosquito)).